The sequence spans 428 residues: GTPase Obg (428 aa).

Residues 1–158 (MFVDQVKVYV…RYIVLELKVL (158 aa)) form the Obg domain. The disordered stretch occupies residues 117-143 (ARGGRGGRGNSRFATPANPAPQLSENG). Residues 159–329 (ADVGLVGFPS…LLFEVANQLE (171 aa)) form the OBG-type G domain. Residues 165 to 172 (GFPSVGKS), 190 to 194 (FTTLV), 212 to 215 (DLPG), 282 to 285 (NKMD), and 310 to 312 (SAV) contribute to the GTP site. Mg(2+)-binding residues include serine 172 and threonine 192. Residues 350 to 428 (TMENEEVPFN…LLEFEFEFID (79 aa)) form the OCT domain.

It belongs to the TRAFAC class OBG-HflX-like GTPase superfamily. OBG GTPase family. Monomer. Interacts with TasA (AC P54507) in pull-down experiments. The cofactor is Mg(2+).

It is found in the cytoplasm. With respect to regulation, inhibited by GDP; less than 20 uM ppGpp stimulates the GTPase, while higher concentrations inhibit. Its function is as follows. Necessary for the transition from vegetative growth to stage 0 or stage II of sporulation, but sporulation subsequent to these stages is unaffected at 45 degrees Celsius. This ts effect is probably due solely to the E-79 mutation. Required for expression of early sporulation genes, further suggesting a role in the induction of sporulation. Depletion effects on sporulation can be partially suppressed by missense mutations in spo0A. Strains depleted for obg stop growing after about 3 hours and do not induce the sigma-B factor following ethanol stress. It cofractionates with the ribosome and upstream stress response regulators RsbR, RsbS and RsbT in size fractionation columns, suggesting the ribosome might serve as a possible mediator of the activity of obg and the stress induction of sigma-B. In glycerol gradients partially associates with ribosomes; this is stabilized by a nonhydrolyzable GTP-analog and to a lesser extent GTP and GDP. An essential GTPase which binds GTP, GDP and possibly (p)ppGpp with moderate affinity, with high nucleotide exchange rates and a fairly low GTP hydrolysis rate. Plays a role in control of the cell cycle, stress response, ribosome biogenesis and in those bacteria that undergo differentiation, in morphogenesis control. This is GTPase Obg from Bacillus subtilis (strain 168).